The sequence spans 302 residues: UTP--glucose-1-phosphate uridylyltransferase (302 aa).

Belongs to the UDPGP type 2 family. In terms of assembly, homotetramer or homopentamer. Mg(2+) serves as cofactor.

It carries out the reaction alpha-D-glucose 1-phosphate + UTP + H(+) = UDP-alpha-D-glucose + diphosphate. May play a role in stationary phase survival. In Escherichia coli O157:H7, this protein is UTP--glucose-1-phosphate uridylyltransferase (galU).